The primary structure comprises 87 residues: Small ribosomal subunit protein bS20 (87 aa).

The span at 1–19 (MANHKSALKRHRQSIKRNL) shows a compositional bias: basic residues. Residues 1–22 (MANHKSALKRHRQSIKRNLRNN) are disordered.

The protein belongs to the bacterial ribosomal protein bS20 family.

Its function is as follows. Binds directly to 16S ribosomal RNA. In Maridesulfovibrio salexigens (strain ATCC 14822 / DSM 2638 / NCIMB 8403 / VKM B-1763) (Desulfovibrio salexigens), this protein is Small ribosomal subunit protein bS20.